Consider the following 444-residue polypeptide: Signal recognition particle 54 kDa protein (444 aa).

GTP-binding positions include Gly102–Thr109, Asp184–Arg188, and Ser244–Asp247.

This sequence belongs to the GTP-binding SRP family. SRP54 subfamily. As to quaternary structure, part of the signal recognition particle protein translocation system, which is composed of SRP and FtsY. Archaeal SRP consists of a 7S RNA molecule of 300 nucleotides and two protein subunits: SRP54 and SRP19.

It is found in the cytoplasm. The enzyme catalyses GTP + H2O = GDP + phosphate + H(+). Involved in targeting and insertion of nascent membrane proteins into the cytoplasmic membrane. Binds to the hydrophobic signal sequence of the ribosome-nascent chain (RNC) as it emerges from the ribosomes. The SRP-RNC complex is then targeted to the cytoplasmic membrane where it interacts with the SRP receptor FtsY. This chain is Signal recognition particle 54 kDa protein, found in Sulfolobus acidocaldarius (strain ATCC 33909 / DSM 639 / JCM 8929 / NBRC 15157 / NCIMB 11770).